Here is a 684-residue protein sequence, read N- to C-terminus: Beta-taxilin (684 aa).

Over residues 1-26 the composition is skewed to polar residues; sequence MEANHSEQLSAERQSTPPGDSSSLPS. Residues 1-132 are disordered; sequence MEANHSEQLS…KEPVSNKEQK (132 aa). Over residues 45 to 64 the composition is skewed to basic and acidic residues; the sequence is PEKEASVHPDISEELNRQLE. Over residues 93–107 the composition is skewed to acidic residues; sequence ESPDNEDGDCEETTE. 2 coiled-coil regions span residues 135-351 and 378-467; these read KKIL…VLKE and NEVF…SEKD. The segment covering 458–475 has biased composition (basic and acidic residues); that stretch reads IRDAEISEKDDQSQHNSD. 3 disordered regions span residues 458 to 485, 514 to 632, and 646 to 684; these read IRDA…VSVD, ESTP…DVPA, and PACE…EGVD. Phosphoserine occurs at positions 474 and 483. A compositionally biased stretch (basic and acidic residues) spans 514 to 524; the sequence is ESTPHQSKETQ. Residues 613–622 are compositionally biased toward polar residues; the sequence is QAPQAPTEAS.

Belongs to the taxilin family. Binds to the C-terminal coiled coil region of syntaxin family members STX1A, STX3A and STX4A. Has a preference for STX1A. As to expression, expressed in skeletal muscle.

In terms of biological role, promotes motor nerve regeneration. May be involved in intracellular vesicle traffic. The polypeptide is Beta-taxilin (TXLNB) (Homo sapiens (Human)).